We begin with the raw amino-acid sequence, 1027 residues long: Presequence protease, mitochondrial (1027 aa).

The N-terminal 22 residues, 1–22, are a transit peptide targeting the mitochondrion; it reads MIRQCWAGLRLCRALYQTSYRW. Zn(2+) is bound at residue His-98. Catalysis depends on Glu-101, which acts as the Proton acceptor. Zn(2+) is bound by residues His-102 and Glu-199. A disulfide bridge connects residues Cys-113 and Cys-550. The segment at 803-827 is disordered; that stretch reads RKAIRPHVVEKSSNPSPSGSEISRT. Positions 814–825 are enriched in low complexity; the sequence is SSNPSPSGSEIS.

The protein belongs to the peptidase M16 family. PreP subfamily. Monomer and homodimer; homodimerization is induced by binding of the substrate. Requires Zn(2+) as cofactor. Post-translationally, a disulfide bond locks the enzyme in the closed conformation preventing substrate entry into the catalytic chamber.

It localises to the mitochondrion matrix. With respect to regulation, mainly exists in a closed and catalytically competent conformation but a closed-to-open switch allows substrate entry into the catalytic chamber. Substrate binding induces closure and dimerization. A disulfide bond may lock the enzyme in a closed conformation preventing substrate entry into the catalytic chamber, participating in redox regulation of the enzyme. Inhibited by metal-chelating agents. Inhibited by nickel and zinc excess, and slightly activated by manganese. In terms of biological role, metalloendopeptidase of the mitochondrial matrix that functions in peptide cleavage and degradation rather than in protein processing. Has an ATP-independent activity. Specifically cleaves peptides in the range of 5 to 65 residues. Shows a preference for cleavage after small polar residues and before basic residues, but without any positional preference. Degrades the transit peptides of mitochondrial proteins after their cleavage. Also degrades other unstructured peptides. This Xenopus laevis (African clawed frog) protein is Presequence protease, mitochondrial (pitrm1).